The primary structure comprises 868 residues: LPS-assembly protein LptD (868 aa).

A signal peptide spans 1–24 (MLKGIHKYLLMCFGTVLFTVQANA).

This sequence belongs to the LptD family. As to quaternary structure, component of the lipopolysaccharide transport and assembly complex. Interacts with LptE and LptA.

The protein localises to the cell outer membrane. Its function is as follows. Together with LptE, is involved in the assembly of lipopolysaccharide (LPS) at the surface of the outer membrane. The sequence is that of LPS-assembly protein LptD from Francisella tularensis subsp. novicida (strain U112).